The following is a 441-amino-acid chain: Protein disulfide isomerase-like 2-3 (441 aa).

The first 18 residues, 1–18 (MRPAVAAALLLVAAAVAA), serve as a signal peptide directing secretion. Thioredoxin domains follow at residues 19 to 139 (SPVS…ALLR) and 159 to 276 (SEKT…ANAA). Catalysis depends on nucleophile residues C59 and C62. A disulfide bridge connects residues C59 and C62. Residues 143–166 (NGKTSAGSGGKKSGGSSEKTEPSA) form a disordered region. Active-site nucleophile residues include C195 and C198. A disulfide bond links C195 and C198.

The protein belongs to the protein disulfide isomerase family.

Its subcellular location is the endoplasmic reticulum lumen. The catalysed reaction is Catalyzes the rearrangement of -S-S- bonds in proteins.. Functionally, acts as a protein-folding catalyst that interacts with nascent polypeptides to catalyze the formation, isomerization, and reduction or oxidation of disulfide bonds. May play a role in storage protein biogenesis. In Oryza sativa subsp. japonica (Rice), this protein is Protein disulfide isomerase-like 2-3 (PDIL2-3).